The primary structure comprises 431 residues: 3-phosphoshikimate 1-carboxyvinyltransferase (431 aa).

Residues lysine 26, serine 27, and arginine 31 each coordinate 3-phosphoshikimate. Lysine 26 is a phosphoenolpyruvate binding site. Residues glycine 99 and arginine 127 each coordinate phosphoenolpyruvate. 3-phosphoshikimate contacts are provided by serine 170, serine 171, glutamine 172, serine 199, glutamate 314, and histidine 343. Residue glutamine 172 coordinates phosphoenolpyruvate. Catalysis depends on glutamate 314, which acts as the Proton acceptor. Phosphoenolpyruvate is bound by residues arginine 347, arginine 388, and lysine 413.

This sequence belongs to the EPSP synthase family. In terms of assembly, monomer.

The protein localises to the cytoplasm. The catalysed reaction is 3-phosphoshikimate + phosphoenolpyruvate = 5-O-(1-carboxyvinyl)-3-phosphoshikimate + phosphate. Its pathway is metabolic intermediate biosynthesis; chorismate biosynthesis; chorismate from D-erythrose 4-phosphate and phosphoenolpyruvate: step 6/7. In terms of biological role, catalyzes the transfer of the enolpyruvyl moiety of phosphoenolpyruvate (PEP) to the 5-hydroxyl of shikimate-3-phosphate (S3P) to produce enolpyruvyl shikimate-3-phosphate and inorganic phosphate. This chain is 3-phosphoshikimate 1-carboxyvinyltransferase, found in Mycobacterium ulcerans (strain Agy99).